Reading from the N-terminus, the 304-residue chain is Large ribosomal subunit protein uL18 (304 aa).

The protein belongs to the universal ribosomal protein uL18 family. Component of a hexameric 5S RNP precursor complex, composed of 5S RNA, RRS1, RPF2, RPL5, RPL11 and SYO1; this complex acts as a precursor for ribosome assembly.

It is found in the cytoplasm. Component of the ribosome, a large ribonucleoprotein complex responsible for the synthesis of proteins in the cell. The small ribosomal subunit (SSU) binds messenger RNAs (mRNAs) and translates the encoded message by selecting cognate aminoacyl-transfer RNA (tRNA) molecules. The large subunit (LSU) contains the ribosomal catalytic site termed the peptidyl transferase center (PTC), which catalyzes the formation of peptide bonds, thereby polymerizing the amino acids delivered by tRNAs into a polypeptide chain. The nascent polypeptides leave the ribosome through a tunnel in the LSU and interact with protein factors that function in enzymatic processing, targeting, and the membrane insertion of nascent chains at the exit of the ribosomal tunnel. The sequence is that of Large ribosomal subunit protein uL18 from Chaetomium thermophilum (strain DSM 1495 / CBS 144.50 / IMI 039719) (Thermochaetoides thermophila).